The following is a 261-amino-acid chain: Ribosomal RNA small subunit methyltransferase J (261 aa).

S-adenosyl-L-methionine is bound by residues 109 to 110, 125 to 126, and D179; these read RD and ER.

This sequence belongs to the methyltransferase superfamily. RsmJ family.

The protein resides in the cytoplasm. The catalysed reaction is guanosine(1516) in 16S rRNA + S-adenosyl-L-methionine = N(2)-methylguanosine(1516) in 16S rRNA + S-adenosyl-L-homocysteine + H(+). Functionally, specifically methylates the guanosine in position 1516 of 16S rRNA. This Pseudomonas aeruginosa (strain ATCC 15692 / DSM 22644 / CIP 104116 / JCM 14847 / LMG 12228 / 1C / PRS 101 / PAO1) protein is Ribosomal RNA small subunit methyltransferase J.